The primary structure comprises 561 residues: Dihydroxy-acid dehydratase (561 aa).

Asp78 is a Mg(2+) binding site. Cys119 provides a ligand contact to [2Fe-2S] cluster. Mg(2+) is bound by residues Asp120 and Lys121. Lys121 bears the N6-carboxylysine mark. [2Fe-2S] cluster is bound at residue Cys192. Glu448 contributes to the Mg(2+) binding site. The active-site Proton acceptor is Ser474.

It belongs to the IlvD/Edd family. As to quaternary structure, homodimer. Requires [2Fe-2S] cluster as cofactor. Mg(2+) serves as cofactor.

The catalysed reaction is (2R)-2,3-dihydroxy-3-methylbutanoate = 3-methyl-2-oxobutanoate + H2O. The enzyme catalyses (2R,3R)-2,3-dihydroxy-3-methylpentanoate = (S)-3-methyl-2-oxopentanoate + H2O. It participates in amino-acid biosynthesis; L-isoleucine biosynthesis; L-isoleucine from 2-oxobutanoate: step 3/4. It functions in the pathway amino-acid biosynthesis; L-valine biosynthesis; L-valine from pyruvate: step 3/4. Its function is as follows. Functions in the biosynthesis of branched-chain amino acids. Catalyzes the dehydration of (2R,3R)-2,3-dihydroxy-3-methylpentanoate (2,3-dihydroxy-3-methylvalerate) into 2-oxo-3-methylpentanoate (2-oxo-3-methylvalerate) and of (2R)-2,3-dihydroxy-3-methylbutanoate (2,3-dihydroxyisovalerate) into 2-oxo-3-methylbutanoate (2-oxoisovalerate), the penultimate precursor to L-isoleucine and L-valine, respectively. The protein is Dihydroxy-acid dehydratase of Sulfurimonas denitrificans (strain ATCC 33889 / DSM 1251) (Thiomicrospira denitrificans (strain ATCC 33889 / DSM 1251)).